We begin with the raw amino-acid sequence, 635 residues long: Threonine--tRNA ligase (635 aa).

One can recognise a TGS domain in the interval 1-58 (MIHVTCNQEAFELPEGASAMDLANKMKQSHCFVGALINDQEKDLSTTLQDGDTVLFLT). The segment at 237 to 528 (DHRVLGTKLD…LIEHFKGRFP (292 aa)) is catalytic. Positions 328, 379, and 505 each coordinate Zn(2+).

Belongs to the class-II aminoacyl-tRNA synthetase family. As to quaternary structure, homodimer. The cofactor is Zn(2+).

It localises to the cytoplasm. The catalysed reaction is tRNA(Thr) + L-threonine + ATP = L-threonyl-tRNA(Thr) + AMP + diphosphate + H(+). Its function is as follows. Catalyzes the attachment of threonine to tRNA(Thr) in a two-step reaction: L-threonine is first activated by ATP to form Thr-AMP and then transferred to the acceptor end of tRNA(Thr). Also edits incorrectly charged L-seryl-tRNA(Thr). This chain is Threonine--tRNA ligase, found in Chlamydia trachomatis serovar L2b (strain UCH-1/proctitis).